The chain runs to 598 residues: tRNA(Met) cytidine acetyltransferase TmcA (598 aa).

Residues Gln-141, 163–172, and Arg-288 contribute to the ATP site; that span reads GRGKSTLAGK. The 159-residue stretch at 332 to 490 folds into the N-acetyltransferase domain; it reads TDLRRLFDAD…HSAMMLYPLS (159 aa). Acetyl-CoA-binding positions include 411-413, 418-424, and Arg-462; these read IAV and QNQGIGS.

The protein belongs to the RNA cytidine acetyltransferase family. TmcA subfamily.

Its subcellular location is the cytoplasm. It catalyses the reaction cytidine(34) in elongator tRNA(Met) + acetyl-CoA + ATP + H2O = N(4)-acetylcytidine(34) in elongator tRNA(Met) + ADP + phosphate + CoA + H(+). Its function is as follows. Catalyzes the formation of N(4)-acetylcytidine (ac(4)C) at the wobble position of tRNA(Met), by using acetyl-CoA as an acetyl donor and ATP (or GTP). The sequence is that of tRNA(Met) cytidine acetyltransferase TmcA from Haemophilus ducreyi (strain 35000HP / ATCC 700724).